Consider the following 472-residue polypeptide: UDP-glucosyltransferase 103 (472 aa).

His-15 functions as the Proton acceptor in the catalytic mechanism. Residue His-15 coordinates an anthocyanidin. Asp-117 (charge relay) is an active-site residue. Positions 344, 346, 361, 364, 365, 366, and 369 each coordinate UDP-alpha-D-glucose. Gly-384 is an an anthocyanidin binding site. UDP-alpha-D-glucose-binding residues include Glu-385 and Gln-386.

Belongs to the UDP-glycosyltransferase family.

It catalyses the reaction (20S)-ginsenoside F1 + UDP-alpha-D-glucose = (20S)-ginsenoside Rg1 + UDP + H(+). It participates in secondary metabolite biosynthesis; terpenoid biosynthesis. Probable component of the triterpene saponins (e.g. ginsenosides) biosynthetic pathway. No detectable activity toward protopanaxatriol (PPT). This is UDP-glucosyltransferase 103 from Panax ginseng (Korean ginseng).